The primary structure comprises 224 residues: MSKKALCIISGGMDSTLCAYLAKKEGYEIIALHFDYEQRTQEKEKECFKQICKALKVEKSYILDVSFIKDIGGNALTDKSIDIPKNELCISDIPPITYVPFRNGIFLSIAGSLAEKENCESIFIGVVEEDGSGYPDCTDEFIQKAQEFINEGTSKNFKVCIKTPLVRLNKAKIVELALKENVPLELTWSCYESEDEACGECDSCLLRLRGFEKAGFKDKIKYKS.

Residue 9 to 19 (ISGGMDSTLCA) coordinates ATP. Positions 190, 198, 201, and 204 each coordinate Zn(2+).

This sequence belongs to the QueC family. It depends on Zn(2+) as a cofactor.

The catalysed reaction is 7-carboxy-7-deazaguanine + NH4(+) + ATP = 7-cyano-7-deazaguanine + ADP + phosphate + H2O + H(+). Its pathway is purine metabolism; 7-cyano-7-deazaguanine biosynthesis. Catalyzes the ATP-dependent conversion of 7-carboxy-7-deazaguanine (CDG) to 7-cyano-7-deazaguanine (preQ(0)). This is 7-cyano-7-deazaguanine synthase from Campylobacter jejuni subsp. doylei (strain ATCC BAA-1458 / RM4099 / 269.97).